The following is a 511-amino-acid chain: MGIQAAEISAILKDQIKNFGQDAEVAEVGQVLSVGDGIARVYGLDKVQAGEMVEFPGGIRGMVLNLETDNVGVVIFGDDRDIKEGDTVKRTGAIVEVPAGKELLGRVVDALGNPIDGKGPLNASERRIADVKAPGIMPRKSVHEPMATGLKSVDAMIPVGRGQRELIIGDRQTGKTAIALDTILNQANYNGREADGMKTLHCIYVAVGQKRSTVAQLVKKLEETGAMAYTTVVAATASDPAPMQYLAPYSATAMGEYFRDNGMDALIIYDDLSKQAVAYRQMSLLLRRPPGREAYPGDVFYLHSRLLERSAKLNEANGAGSLTALPIIETQAGDVSAYIPTNVISITDGQIFLETELFFQGIRPAVNTGLSVSRVGSAAQTKAMKSVAGPVKLELAQYREMAAFAQFGSDLDAATQKLLNRGARLTELMKQPQYSPLTNAEIVIVIYAGTKGYLDGIPVRDVTKWEHGLLQYLRNQKADLLEDMTKNDRKVAGELEDAIKAALDGYAKTYA.

Position 169–176 (169–176) interacts with ATP; sequence GDRQTGKT.

The protein belongs to the ATPase alpha/beta chains family. As to quaternary structure, F-type ATPases have 2 components, CF(1) - the catalytic core - and CF(0) - the membrane proton channel. CF(1) has five subunits: alpha(3), beta(3), gamma(1), delta(1), epsilon(1). CF(0) has three main subunits: a(1), b(2) and c(9-12). The alpha and beta chains form an alternating ring which encloses part of the gamma chain. CF(1) is attached to CF(0) by a central stalk formed by the gamma and epsilon chains, while a peripheral stalk is formed by the delta and b chains.

The protein localises to the cell inner membrane. It catalyses the reaction ATP + H2O + 4 H(+)(in) = ADP + phosphate + 5 H(+)(out). Produces ATP from ADP in the presence of a proton gradient across the membrane. The alpha chain is a regulatory subunit. In Paracoccus denitrificans (strain Pd 1222), this protein is ATP synthase subunit alpha.